A 1396-amino-acid polypeptide reads, in one-letter code: Melanoma inhibitory activity protein 2 (1396 aa).

A signal peptide spans 1 to 22 (MAEVSVQRILLLVVSLAKCLEG). The Lumenal segment spans residues 23–604 (TKLLAHLKKC…YGFMSSALSP (582 aa)). The region spanning 39–101 (TLISRVLALR…PRDAVEIEEV (63 aa)) is the SH3 domain. Asparagine 59 is a glycosylation site (N-linked (GlcNAc...) asparagine). Disordered stretches follow at residues 197-288 (EGAG…VPDE) and 331-361 (ESNP…TDKE). Over residues 243–258 (SDTEPTQELALEEESD) the composition is skewed to acidic residues. An N-linked (GlcNAc...) asparagine glycan is attached at asparagine 366. Disordered stretches follow at residues 396–421 (DKGE…PEKE) and 525–557 (PMEE…ELSV). The stretch at 605–625 (IEILLESVVAALPEDMRADFN) is an intramembrane region. Topologically, residues 626–628 (PSG) are lumenal. The chain crosses the membrane as a helical span at residues 629–649 (FSLELAVCVLSVGLLAVVLFL). At 650–1396 (WRGFRSIRSR…AADPPETQEA (747 aa)) the chain is on the cytoplasmic side. A mediates interaction with MIA3 region spans residues 651 to 1243 (RGFRSIRSRF…RSYNMPSLDK (593 aa)). Coiled coils occupy residues 693–867 (YEGL…LVTS) and 914–1082 (AAKL…NRQK). The interval 1103-1396 (PNTAFGREHS…AADPPETQEA (294 aa)) is disordered. The proline-rich domain (PRD); probably mediates interaction with COPII coat subunits stretch occupies residues 1105-1396 (TAFGREHSPY…AADPPETQEA (292 aa)). The segment covering 1135-1146 (LLEGPLRLSPLL) has biased composition (low complexity). The span at 1165 to 1179 (MNTERGESSYDRLSD) shows a compositional bias: basic and acidic residues. The span at 1252–1269 (MESSGNGTKDNLGNSNVP) shows a compositional bias: polar residues. Composition is skewed to pro residues over residues 1331 to 1342 (RDFPGPPLPPFP) and 1351 to 1368 (GFPP…PPPH).

Belongs to the MIA/OTOR family. In terms of assembly, interacts with MIA3. Interacts with the COPII coat subunits SEC23A, SEC23B and maybe SEC24C. Interacts with PREB; recruits PREB to endoplasmic reticulum exit sites. Interacts with APOB. Isoform 1 is expressed in liver (at protein level). Isoform 2 is highly expressed in liver and weakly in testis.

Its subcellular location is the endoplasmic reticulum membrane. Plays a role in the transport of cargos that are too large to fit into COPII-coated vesicles and require specific mechanisms to be incorporated into membrane-bound carriers and exported from the endoplasmic reticulum. Plays a role in the secretion of lipoproteins, pre-chylomicrons and pre-VLDLs, by participating in their export from the endoplasmic reticulum. Thereby, may play a role in cholesterol and triglyceride homeostasis. Required for collagen VII (COL7A1) secretion by loading COL7A1 into transport carriers and recruiting PREB/SEC12 at the endoplasmic reticulum exit sites. The protein is Melanoma inhibitory activity protein 2 of Mus musculus (Mouse).